A 240-amino-acid polypeptide reads, in one-letter code: Proteasome subunit beta 1 (240 aa).

Positions 1–46 (MRDMTPGPDLSGPQAADEFQSDPYAPEVGELPEQSAQDSEKVNKTG) are cleaved as a propeptide — removed in mature form; by autocatalysis. The tract at residues 1–48 (MRDMTPGPDLSGPQAADEFQSDPYAPEVGELPEQSAQDSEKVNKTGTT) is disordered. Thr-47 serves as the catalytic Nucleophile.

It belongs to the peptidase T1B family. In terms of assembly, the 20S proteasome core is composed of 14 alpha and 14 beta subunits that assemble into four stacked heptameric rings, resulting in a barrel-shaped structure. The two inner rings, each composed of seven catalytic beta subunits, are sandwiched by two outer rings, each composed of seven alpha subunits. The catalytic chamber with the active sites is on the inside of the barrel. Has a gated structure, the ends of the cylinder being occluded by the N-termini of the alpha-subunits. Is capped at one or both ends by the proteasome regulatory ATPase, PAN.

The protein localises to the cytoplasm. It catalyses the reaction Cleavage of peptide bonds with very broad specificity.. The formation of the proteasomal ATPase PAN-20S proteasome complex, via the docking of the C-termini of PAN into the intersubunit pockets in the alpha-rings, triggers opening of the gate for substrate entry. Interconversion between the open-gate and close-gate conformations leads to a dynamic regulation of the 20S proteasome proteolysis activity. Functionally, component of the proteasome core, a large protease complex with broad specificity involved in protein degradation. In Haloarcula marismortui (strain ATCC 43049 / DSM 3752 / JCM 8966 / VKM B-1809) (Halobacterium marismortui), this protein is Proteasome subunit beta 1.